A 320-amino-acid polypeptide reads, in one-letter code: Mas-related G-protein coupled receptor member D (320 aa).

The Extracellular segment spans residues M1–L33. Residues N2, N6, and N16 are each glycosylated (N-linked (GlcNAc...) asparagine). A helical transmembrane segment spans residues A34–F54. At R55 to S62 the chain is on the cytoplasmic side. Residues I63 to L83 traverse the membrane as a helical segment. Topologically, residues S84–G112 are extracellular. A helical membrane pass occupies residues L113–F133. The Cytoplasmic segment spans residues K134–S142. The chain crosses the membrane as a helical span at residues A143–F163. Residues C164 to Q182 lie on the Extracellular side of the membrane. The helical transmembrane segment at A183–V203 threads the bilayer. Residues R204–R218 lie on the Cytoplasmic side of the membrane. Residues L219 to F239 form a helical membrane-spanning segment. The Extracellular segment spans residues Y240–Y257. A helical membrane pass occupies residues F258–G280. Residues S281–A320 lie on the Cytoplasmic side of the membrane. The segment at E301–A320 is disordered. Positions G308–A320 are enriched in low complexity.

It belongs to the G-protein coupled receptor 1 family. Mas subfamily. As to expression, co-expressed in the small diameter neurons with P2X3 and VR1 in dorsal root ganglia.

The protein resides in the cell membrane. Functionally, may regulate nociceptor function and/or development, including the sensation or modulation of pain. Functions as a specific membrane receptor for beta-alanine. The receptor couples with G-protein G(q) and G(i). This Macaca fascicularis (Crab-eating macaque) protein is Mas-related G-protein coupled receptor member D (MRGPRD).